The primary structure comprises 204 residues: Probable chorismate pyruvate-lyase (204 aa).

The substrate site is built by arginine 78, leucine 131, and glutamate 190.

The protein belongs to the UbiC family.

Its subcellular location is the cytoplasm. It carries out the reaction chorismate = 4-hydroxybenzoate + pyruvate. Its pathway is cofactor biosynthesis; ubiquinone biosynthesis. Removes the pyruvyl group from chorismate, with concomitant aromatization of the ring, to provide 4-hydroxybenzoate (4HB) for the ubiquinone pathway. This chain is Probable chorismate pyruvate-lyase, found in Shewanella frigidimarina (strain NCIMB 400).